We begin with the raw amino-acid sequence, 205 residues long: Protease (205 aa).

Catalysis depends on residues His-54, Asp-71, and Cys-122.

It belongs to the peptidase C5 family. As to quaternary structure, interacts with protease cofactor pVI-C; this interaction is necessary for protease activation.

It is found in the virion. The protein resides in the host nucleus. It catalyses the reaction Cleaves proteins of the adenovirus and its host cell at two consensus sites: -Yaa-Xaa-Gly-Gly-|-Xaa- and -Yaa-Xaa-Gly-Xaa-|-Gly- (in which Yaa is Met, Ile or Leu, and Xaa is any amino acid).. With respect to regulation, requires DNA and protease cofactor for maximal activation. Inside nascent virions, becomes partially activated by binding to the viral DNA, allowing it to cleave the cofactor that binds to the protease and fully activates it. Actin, like the viral protease cofactor, seems to act as a cofactor in the cleavage of cytokeratin 18 and of actin itself. Functionally, cleaves viral precursor proteins (pTP, pIIIa, pVI, pVII, pVIII, and pX) inside newly assembled particles giving rise to mature virions. Protease complexed to its cofactor slides along the viral DNA to specifically locate and cleave the viral precursors. Mature virions have a weakened organization compared to the unmature virions, thereby facilitating subsequent uncoating. Without maturation, the particle lacks infectivity and is unable to uncoat. Late in adenovirus infection, in the cytoplasm, may participate in the cytoskeleton destruction. Cleaves host cell cytoskeletal keratins K7 and K18. The sequence is that of Protease from Homo sapiens (Human).